The primary structure comprises 366 residues: Mannonate dehydratase (366 aa).

The protein belongs to the mannonate dehydratase family. Fe(2+) serves as cofactor. Requires Mn(2+) as cofactor.

It carries out the reaction D-mannonate = 2-dehydro-3-deoxy-D-gluconate + H2O. Its pathway is carbohydrate metabolism; pentose and glucuronate interconversion. Its function is as follows. Catalyzes the dehydration of D-mannonate. This is Mannonate dehydratase from Streptococcus pneumoniae (strain 70585).